A 766-amino-acid polypeptide reads, in one-letter code: FYVE, RhoGEF and PH domain-containing protein 4 (766 aa).

The tract at residues 1 to 150 (MEESNPAPTS…SSIANSHDEN (150 aa)) is actin filament-binding. 2 stretches are compositionally biased toward polar residues: residues 47–62 (LNIP…TSSP) and 70–85 (HSPQ…TQGQ). Disordered regions lie at residues 47–86 (LNIP…QGQH) and 143–173 (IANS…GEPG). The 188-residue stretch at 206 to 393 (KLHKIATELL…STAASHSNSA (188 aa)) folds into the DH domain. One can recognise a PH 1 domain in the interval 422 to 521 (ELIKEGQILK…WIKALQESID (100 aa)). Residues 559 to 619 (DNEVTMCMKC…VCKDCYQIIS (61 aa)) form an FYVE-type zinc finger. Zn(2+) is bound by residues C565, C568, C582, C585, C590, C593, C611, and C614. Positions 643–740 (NSEVCSFLQY…WLKIILLAVT (98 aa)) constitute a PH 2 domain. S702 and S716 each carry phosphoserine. Residues 746 to 766 (GPSEHLATLNNLPGPKKKSEC) are disordered.

In terms of assembly, homooligomer. Detected in thymus, lung, heart, skeletal muscle, small intestine, liver, kidney, spleen and testis. Expressed in all parts of the brain and in the spinal cord at embryonic, postnatal, and adult stages. Levels of expression are lower in postnatal and adult tissues than in embryonic tissues.

The protein resides in the cytoplasm. It localises to the cytoskeleton. Its subcellular location is the cell projection. The protein localises to the filopodium. Functionally, activates CDC42, a member of the Ras-like family of Rho- and Rac proteins, by exchanging bound GDP for free GTP. Activates MAPK8. Plays a role in regulating the actin cytoskeleton and cell shape. Promotes the formation of lamellipodia. This chain is FYVE, RhoGEF and PH domain-containing protein 4 (Fgd4), found in Mus musculus (Mouse).